Here is a 440-residue protein sequence, read N- to C-terminus: Xaa-Pro dipeptidase (440 aa).

5 residues coordinate Mn(2+): aspartate 244, aspartate 255, histidine 336, glutamate 381, and glutamate 420.

This sequence belongs to the peptidase M24B family. Bacterial-type prolidase subfamily. The cofactor is Mn(2+).

It carries out the reaction Xaa-L-Pro dipeptide + H2O = an L-alpha-amino acid + L-proline. Its function is as follows. Splits dipeptides with a prolyl residue in the C-terminal position. The polypeptide is Xaa-Pro dipeptidase (Pseudoalteromonas translucida (strain TAC 125)).